Reading from the N-terminus, the 332-residue chain is Ribosomal RNA-processing protein 8 (332 aa).

Positions 1–109 are disordered; sequence MGKKRINEVS…EVEKKNEEGD (109 aa). Composition is skewed to basic residues over residues 38–53 and 82–94; these read KKKK…KLAA and KKKK…KKKY. Positions 95–109 are enriched in basic and acidic residues; it reads KPEAAEVEKKNEEGD. Residues His-158, Gly-193, Asp-213, Asp-225, Met-226, and Cys-242 each contribute to the S-adenosyl-L-methionine site.

This sequence belongs to the methyltransferase superfamily. RRP8 family.

The protein localises to the nucleus. It localises to the nucleolus. Probable methyltransferase required to silence rDNA. The chain is Ribosomal RNA-processing protein 8 (rrp-8) from Caenorhabditis briggsae.